The following is a 464-amino-acid chain: Heterogeneous nuclear ribonucleoprotein K (464 aa).

Residue Met1 is modified to N-acetylmethionine. Positions 1–37 (METEQPEETFPNTETNGEFGKRPAEDMEEEQAFKRSR) are disordered. Residues 1-276 (METEQPEETF…GRGGRPMPPS (276 aa)) are necessary for interaction with DDX1. Residues 19–37 (FGKRPAEDMEEEQAFKRSR) show a composition bias toward basic and acidic residues. The residue at position 34 (Lys34) is an N6-acetyllysine; alternate. Lys34 is covalently cross-linked (Glycyl lysine isopeptide (Lys-Gly) (interchain with G-Cter in SUMO1); alternate). Lys34 participates in a covalent cross-link: Glycyl lysine isopeptide (Lys-Gly) (interchain with G-Cter in SUMO2); alternate. Ser36 is subject to Phosphoserine. The residue at position 39 (Thr39) is a Phosphothreonine. Residues 42–104 (MVELRILLQS…ETIGEILKKI (63 aa)) enclose the KH 1 domain. Residues Lys52 and Lys60 each participate in a glycyl lysine isopeptide (Lys-Gly) (interchain with G-Cter in SUMO2) cross-link. Repeat copies occupy residues 54-76 (AGAVIGKGGKNIKALRTDYNASV) and 59-62 (GKGG). Positions 54 to 421 (AGAVIGKGGK…QIRHESGASI (368 aa)) are 2 X 22 AA approximate repeats. The interval 59–407 (GKGGKNIKAL…LAGSIIGKGG (349 aa)) is 5 X 4 AA repeats of G-X-G-G. A phosphoserine mark is found at Ser75 and Ser116. Residues 144-209 (DCELRLLIHQ…DRVVECIKII (66 aa)) form the KH 2 domain. Residue Lys163 forms a Glycyl lysine isopeptide (Lys-Gly) (interchain with G-Cter in SUMO1); alternate linkage. Lys163 participates in a covalent cross-link: Glycyl lysine isopeptide (Lys-Gly) (interchain with G-Cter in SUMO2); alternate. An N6-acetyllysine modification is found at Lys198. 2 positions are modified to phosphoserine: Ser214 and Ser216. Residue Lys219 forms a Glycyl lysine isopeptide (Lys-Gly) (interchain with G-Cter in SUMO2); alternate linkage. Lys219 carries the N6-succinyllysine; alternate modification. Residues 236-273 (YGGFTMMFDDRRGRPVGFPMRGRGGFDRMPPGRGGRPM) are RNA-binding RGG-box. 3 consecutive repeat copies span residues 245-250 (DRRGRP), 257-260 (GRGG), and 267-270 (GRGG). Residues 245–329 (DRRGRPVGFP…LMAYDRRGRP (85 aa)) form a 2 X 6 AA approximate repeats region. Residues 250-329 (PVGFPMRGRG…LMAYDRRGRP (80 aa)) form a disordered region. Residues 252–266 (GFPMRGRGGFDRMPP) are compositionally biased toward low complexity. Basic and acidic residues predominate over residues 276–285 (SRRDYDDMSP). Ser284 is subject to Phosphoserine. One copy of the 3-4 repeat lies at 295 to 298 (GRGG). Residue Arg316 is modified to Omega-N-methylarginine. A 2-2 repeat occupies 324 to 329 (DRRGRP). At Arg377 the chain carries Omega-N-methylarginine. Residue Ser379 is modified to Phosphoserine. Tyr380 is subject to Phosphotyrosine. A KH 3 domain is found at 387–451 (IITTQVTIPK…DQIQNAQYLL (65 aa)). Repeat copies occupy residues 399-421 (AGSIIGKGGQRIKQIRHESGASI) and 404-407 (GKGG). Lys405 is modified (N6-acetyllysine; alternate). Lys405 is covalently cross-linked (Glycyl lysine isopeptide (Lys-Gly) (interchain with G-Cter in SUMO2); alternate). At Ser420 the chain carries Phosphoserine. A Glycyl lysine isopeptide (Lys-Gly) (interchain with G-Cter in SUMO1); alternate cross-link involves residue Lys422. Residue Lys422 forms a Glycyl lysine isopeptide (Lys-Gly) (interchain with G-Cter in SUMO2); alternate linkage. Residue Lys422 forms a Glycyl lysine isopeptide (Lys-Gly) (interchain with G-Cter in SUMO); alternate linkage.

As to quaternary structure, identified in the spliceosome C complex. Interacts with ANKRD28, RBM42 and ZIK1. Interacts with DDX1. Interacts with MDM2; this interaction leads to ubiquitination and proteasomal degradation. Interacts with p53/TP53. Interacts with BRDT. Interacts with IVNS1ABP. Interacts with PPIA/CYPA. Part of a transcription inhibitory ribonucleoprotein complex composed at least of the circular RNA circZNF827, ZNF827 and HNRNPL. In terms of processing, sumoylated by CBX4. Sumoylation is increased upon DNA damage, such as that produced by doxorubicin, etoposide, UV light and camptothecin, due to enhanced CBX4 phosphorylation by HIPK2 under these conditions. Ubiquitinated by MDM2. Doxorubicin treatment does not affect monoubiquitination, but slightly decreases HNRNPK poly-ubiquitination. Post-translationally, O-glycosylated (O-GlcNAcylated), in a cell cycle-dependent manner.

The protein resides in the cytoplasm. It is found in the nucleus. It localises to the nucleoplasm. The protein localises to the cell projection. Its subcellular location is the podosome. Functionally, one of the major pre-mRNA-binding proteins. Binds tenaciously to poly(C) sequences. Likely to play a role in the nuclear metabolism of hnRNAs, particularly for pre-mRNAs that contain cytidine-rich sequences. Can also bind poly(C) single-stranded DNA. Plays an important role in p53/TP53 response to DNA damage, acting at the level of both transcription activation and repression. When sumoylated, acts as a transcriptional coactivator of p53/TP53, playing a role in p21/CDKN1A and 14-3-3 sigma/SFN induction. As far as transcription repression is concerned, acts by interacting with long intergenic RNA p21 (lincRNA-p21), a non-coding RNA induced by p53/TP53. This interaction is necessary for the induction of apoptosis, but not cell cycle arrest. As part of a ribonucleoprotein complex composed at least of ZNF827, HNRNPL and the circular RNA circZNF827 that nucleates the complex on chromatin, may negatively regulate the transcription of genes involved in neuronal differentiation. The chain is Heterogeneous nuclear ribonucleoprotein K (HNRNPK) from Macaca fascicularis (Crab-eating macaque).